The following is a 220-amino-acid chain: V-set and transmembrane domain-containing protein 2-like protein (220 aa).

The signal sequence occupies residues 1 to 24; that stretch reads MGAPLAAALGALHYLALFLQLGGA. Residues 41 to 158 form the Ig-like domain; that stretch reads ALFTETPHDM…DGGRGVPRVL (118 aa). An intrachain disulfide couples cysteine 62 to cysteine 142. Residues 165 to 180 show a composition bias toward pro residues; sequence PAPPRAPRPRGQPPGE. The disordered stretch occupies residues 165–220; sequence PAPPRAPRPRGQPPGEEPGRGPTLLFLIILPGTGSGTPREAEPHQPHAGGCPARQS.

The sequence is that of V-set and transmembrane domain-containing protein 2-like protein (Vstm2l) from Mus musculus (Mouse).